The chain runs to 347 residues: NADH-ubiquinone oxidoreductase chain 2 (347 aa).

10 consecutive transmembrane segments (helical) span residues 13 to 33, 55 to 75, 96 to 116, 122 to 142, 151 to 171, 178 to 198, 199 to 219, 237 to 257, 274 to 294, and 326 to 346; these read IFTGTLITALSSHWFFAWLGL, AAIKYFLTQATASMILLMAIL, LMIVTALAMKLGMAPFHFWVP, VPLTSGLLLLTWQKLAPISIM, TNILLTLSILSILVGGWGGLN, ILAYSSITHMGWMMAVLPYNP, DITILNLIIYIILTTTAFLIL, LTWLMPLIPSTLLSLGGLPPL, GNLITPTIMAIITLLNLYFYV, and LPTLTILTTLLLPISPLILSI.

The protein belongs to the complex I subunit 2 family. Core subunit of respiratory chain NADH dehydrogenase (Complex I) which is composed of 45 different subunits. Interacts with TMEM242.

Its subcellular location is the mitochondrion inner membrane. The catalysed reaction is a ubiquinone + NADH + 5 H(+)(in) = a ubiquinol + NAD(+) + 4 H(+)(out). Core subunit of the mitochondrial membrane respiratory chain NADH dehydrogenase (Complex I) which catalyzes electron transfer from NADH through the respiratory chain, using ubiquinone as an electron acceptor. Essential for the catalytic activity and assembly of complex I. The polypeptide is NADH-ubiquinone oxidoreductase chain 2 (Pongo abelii (Sumatran orangutan)).